Consider the following 73-residue polypeptide: Antitoxin VapB20 (73 aa).

In terms of biological role, antitoxin component of a type II toxin-antitoxin (TA) system. Upon expression in E.coli neutralizes the toxic effect of cognate toxin VapC20. The sequence is that of Antitoxin VapB20 (vapB20) from Mycobacterium tuberculosis (strain ATCC 25618 / H37Rv).